A 1061-amino-acid polypeptide reads, in one-letter code: Atrial natriuretic peptide receptor 1 (1061 aa).

Residues 1–32 (MPGPRRPAGSRLRLLLLLLLPPLLLLLRGSHA) form the signal peptide. Residues 33 to 473 (GNLTVAVVLP…CNQDHLSTLE (441 aa)) lie on the Extracellular side of the membrane. Asn-34 and Asn-45 each carry an N-linked (GlcNAc...) asparagine glycan. Chloride contacts are provided by Ser-85, Gly-117, and Cys-118. Disulfide bonds link Cys-92–Cys-118 and Cys-196–Cys-245. Asn-212, Asn-338, Asn-379, Asn-386, and Asn-427 each carry an N-linked (GlcNAc...) asparagine glycan. Cysteines 455 and 464 form a disulfide. A helical transmembrane segment spans residues 474 to 494 (VLALVGSLSLLGILIVSFFIY). Over 495 to 1061 (RKMQLEKELA…LGERGSSTRG (567 aa)) the chain is Cytoplasmic. Phosphoserine is present on residues Ser-519 and Ser-529. Positions 528 to 805 (GSRLTLSGRG…QIRLTLRKFN (278 aa)) constitute a Protein kinase domain. Phosphothreonine is present on Thr-532. Ser-534, Ser-538, and Ser-542 each carry phosphoserine. A Phosphothreonine modification is found at Thr-545. A Guanylate cyclase domain is found at 876–1006 (TIYFSDIVGF…DTVNTASRME (131 aa)).

Belongs to the adenylyl cyclase class-4/guanylyl cyclase family. Homodimer. In terms of processing, phosphorylation of the protein kinase-like domain is required for full activation by ANP.

The protein localises to the membrane. It catalyses the reaction GTP = 3',5'-cyclic GMP + diphosphate. Its function is as follows. Receptor for the atrial natriuretic peptide NPPA/ANP and the brain natriuretic peptide NPPB/BNP which are potent vasoactive hormones playing a key role in cardiovascular homeostasis. Plays an essential role in the regulation of endothelial cell senescence and vascular aging. Upon activation by ANP or BNP, stimulates the production of cyclic guanosine monophosphate (cGMP) that promotes vascular tone and volume homeostasis by activation of protein kinase cGMP-dependent 1/PRKG1 and subsequently PRKAA1, thereby controlling blood pressure and maintaining cardiovascular homeostasis. In Homo sapiens (Human), this protein is Atrial natriuretic peptide receptor 1.